The chain runs to 476 residues: Surface membrane glycoprotein GP46/M-2 (476 aa).

Residues 1–32 form the signal peptide; the sequence is MAQCVRRLVLAAPLAAVVALLLCTSSAPVARA. 4 tandem repeats follow at residues 107–130, 131–154, 155–178, and 179–202. Residues 107–202 are 4 X 24 AA tandem repeats; that stretch reads VMILALDFGA…FCGCVPDSWR (96 aa). Disordered stretches follow at residues 231–255 and 348–370; these read APGT…PSPG and ALSP…RRRA. Cys452 is lipidated: GPI-anchor amidated cysteine. The propeptide at 453–476 is removed in mature form; sequence PALFDGARLRCCALVVCAGAAPAG.

The protein resides in the cell membrane. The chain is Surface membrane glycoprotein GP46/M-2 from Leishmania amazonensis.